We begin with the raw amino-acid sequence, 92 residues long: Small ribosomal subunit protein bS20 (92 aa).

Belongs to the bacterial ribosomal protein bS20 family.

Binds directly to 16S ribosomal RNA. This chain is Small ribosomal subunit protein bS20, found in Thermosipho africanus (strain TCF52B).